Reading from the N-terminus, the 397-residue chain is Inositol 3-kinase (397 aa).

Residues serine 228, glycine 278 to aspartate 281, and asparagine 305 each bind ATP. Aspartate 281 acts as the Proton acceptor in catalysis.

This sequence belongs to the carbohydrate kinase pfkB family. As to expression, expressed in roots, leaf blade shoots, leaf sheath shoots and panicles.

The catalysed reaction is myo-inositol + ATP = 1D-myo-inositol 3-phosphate + ADP + H(+). In terms of biological role, kinase that phosphorylates myo-inositol to produce multiple myo-inositol monophosphates. Participates in phytic acid biosynthesis in developing seeds. Phytic acid is the primary storage form of phosphorus in cereal grains and other plant seeds. The polypeptide is Inositol 3-kinase (Oryza sativa subsp. japonica (Rice)).